The sequence spans 519 residues: ATP synthase subunit alpha (519 aa).

Residue 175 to 182 (GDRQTGKT) coordinates ATP.

It belongs to the ATPase alpha/beta chains family. As to quaternary structure, F-type ATPases have 2 components, CF(1) - the catalytic core - and CF(0) - the membrane proton channel. CF(1) has five subunits: alpha(3), beta(3), gamma(1), delta(1), epsilon(1). CF(0) has three main subunits: a(1), b(2) and c(9-12). The alpha and beta chains form an alternating ring which encloses part of the gamma chain. CF(1) is attached to CF(0) by a central stalk formed by the gamma and epsilon chains, while a peripheral stalk is formed by the delta and b chains.

It localises to the cell inner membrane. It carries out the reaction ATP + H2O + 4 H(+)(in) = ADP + phosphate + 5 H(+)(out). Functionally, produces ATP from ADP in the presence of a proton gradient across the membrane. The alpha chain is a regulatory subunit. This chain is ATP synthase subunit alpha, found in Acinetobacter baylyi (strain ATCC 33305 / BD413 / ADP1).